We begin with the raw amino-acid sequence, 294 residues long: Antiviral protein alpha (294 aa).

The signal sequence occupies residues 1-24; it reads MKMMVVVVVMMLSWLILKPPSTWA. 2 disulfides stabilise this stretch: C58/C282 and C108/C130. The active site involves E199. A propeptide spanning residues 286-294 is cleaved from the precursor; sequence YQSAMFPHL.

The protein belongs to the ribosome-inactivating protein family. Type 1 RIP subfamily. In terms of assembly, monomer.

It is found in the secreted. It localises to the cell wall. The catalysed reaction is Endohydrolysis of the N-glycosidic bond at one specific adenosine on the 28S rRNA.. Functionally, inhibits viral infection of plants, and protein synthesis in vitro. Has also been shown to inhibit the replication of mammalian viruses. The protein may provide a means of cellular suicide upon invasion by a virus. The protein is Antiviral protein alpha of Phytolacca americana (American pokeweed).